We begin with the raw amino-acid sequence, 318 residues long: Ubiquitin-like domain-containing CTD phosphatase 1 (318 aa).

Residues 3 to 81 (LSLIIKWGGQ…IMMMGTREES (79 aa)) enclose the Ubiquitin-like domain. Residues 133 to 294 (PREGKKLLVL…VKLSQYLKEI (162 aa)) form the FCP1 homology domain. Asp-143, Asp-145, and Asp-253 together coordinate Mg(2+).

Mg(2+) is required as a cofactor.

Its subcellular location is the nucleus. It carries out the reaction O-phospho-L-seryl-[protein] + H2O = L-seryl-[protein] + phosphate. The catalysed reaction is O-phospho-L-threonyl-[protein] + H2O = L-threonyl-[protein] + phosphate. Dephosphorylates 26S nuclear proteasomes, thereby decreasing their proteolytic activity. Recruited to the 19S regulatory particle of the 26S proteasome where it dephosphorylates 19S component psmc2 which impairs psmc2 ATPase activity and disrupts 26S proteasome assembly. Has also been reported to stimulate the proteolytic activity of the 26S proteasome. The protein is Ubiquitin-like domain-containing CTD phosphatase 1 (ublcp1) of Xenopus laevis (African clawed frog).